A 161-amino-acid polypeptide reads, in one-letter code: uncharacterized protein (161 aa).

Disordered stretches follow at residues 1–67 (MNSN…IQNF) and 80–147 (DSHQ…KKKQ). A compositionally biased stretch (low complexity) spans 84-126 (NFNDNGFNNNNNNNNSNMNHNFSNQNNYNNNNNNNNNNNSNFN). Positions 135 to 147 (GTSSQVGNNKKKQ) are enriched in polar residues.

This is an uncharacterized protein from Dictyostelium discoideum (Social amoeba).